The following is a 428-amino-acid chain: Light-independent protochlorophyllide reductase subunit N (428 aa).

3 residues coordinate [4Fe-4S] cluster: Cys-31, Cys-56, and Cys-117.

This sequence belongs to the BchN/ChlN family. Protochlorophyllide reductase is composed of three subunits; BchL, BchN and BchB. Forms a heterotetramer of two BchB and two BchN subunits. [4Fe-4S] cluster is required as a cofactor.

The catalysed reaction is chlorophyllide a + oxidized 2[4Fe-4S]-[ferredoxin] + 2 ADP + 2 phosphate = protochlorophyllide a + reduced 2[4Fe-4S]-[ferredoxin] + 2 ATP + 2 H2O. The protein operates within porphyrin-containing compound metabolism; bacteriochlorophyll biosynthesis (light-independent). In terms of biological role, component of the dark-operative protochlorophyllide reductase (DPOR) that uses Mg-ATP and reduced ferredoxin to reduce ring D of protochlorophyllide (Pchlide) to form chlorophyllide a (Chlide). This reaction is light-independent. The NB-protein (BchN-BchB) is the catalytic component of the complex. The polypeptide is Light-independent protochlorophyllide reductase subunit N (Rhodopseudomonas palustris (strain BisB5)).